The chain runs to 190 residues: 3-isopropylmalate dehydratase small subunit (190 aa).

Belongs to the LeuD family. LeuD type 1 subfamily. Heterodimer of LeuC and LeuD.

The enzyme catalyses (2R,3S)-3-isopropylmalate = (2S)-2-isopropylmalate. Its pathway is amino-acid biosynthesis; L-leucine biosynthesis; L-leucine from 3-methyl-2-oxobutanoate: step 2/4. Functionally, catalyzes the isomerization between 2-isopropylmalate and 3-isopropylmalate, via the formation of 2-isopropylmaleate. This is 3-isopropylmalate dehydratase small subunit from Staphylococcus aureus (strain MRSA252).